The chain runs to 207 residues: Small ribosomal subunit protein uS7y (207 aa).

Ala2 bears the N-acetylalanine mark.

This sequence belongs to the universal ribosomal protein uS7 family. In terms of tissue distribution, expressed in root tips, lateral root primordia, leaf primordia, shoot apical meristem and vasculature of cotyledons.

In Arabidopsis thaliana (Mouse-ear cress), this protein is Small ribosomal subunit protein uS7y.